A 932-amino-acid polypeptide reads, in one-letter code: 2-oxoglutarate dehydrogenase E1 component (932 aa).

It belongs to the alpha-ketoglutarate dehydrogenase family. Homodimer. Part of the 2-oxoglutarate dehydrogenase (OGDH) complex composed of E1 (2-oxoglutarate dehydrogenase), E2 (dihydrolipoamide succinyltransferase) and E3 (dihydrolipoamide dehydrogenase); the complex contains multiple copies of the three enzymatic components (E1, E2 and E3). Thiamine diphosphate is required as a cofactor.

The enzyme catalyses N(6)-[(R)-lipoyl]-L-lysyl-[protein] + 2-oxoglutarate + H(+) = N(6)-[(R)-S(8)-succinyldihydrolipoyl]-L-lysyl-[protein] + CO2. E1 component of the 2-oxoglutarate dehydrogenase (OGDH) complex which catalyzes the decarboxylation of 2-oxoglutarate, the first step in the conversion of 2-oxoglutarate to succinyl-CoA and CO(2). The chain is 2-oxoglutarate dehydrogenase E1 component from Staphylococcus aureus (strain MW2).